A 362-amino-acid chain; its full sequence is Endopolygalacturonase II (362 aa).

The N-terminal stretch at 1 to 21 is a signal peptide; it reads MHSFASLLAYGLVAGATFASA. Positions 22 to 27 are excised as a propeptide; sequence SPIEAR. Cysteine 30 and cysteine 45 form a disulfide bridge. A PbH1 1 repeat occupies 156–186; the sequence is ANDITFTDVTINNADGDTQGGHNTDAFDVGN. The active-site Proton donor is the aspartate 201. A disulfide bridge connects residues cysteine 203 and cysteine 219. 4 PbH1 repeats span residues 209 to 229, 238 to 259, 267 to 289, and 301 to 322; these read GENI…SIGS, VKNV…RIKT, VSEI…VIQQ, and TNGV…DSGA. Residue histidine 223 is part of the active site. Asparagine 240 carries an N-linked (GlcNAc...) (high mannose) asparagine glycan. 2 cysteine pairs are disulfide-bonded: cysteine 329–cysteine 334 and cysteine 353–cysteine 362.

This sequence belongs to the glycosyl hydrolase 28 family.

Its subcellular location is the secreted. It carries out the reaction (1,4-alpha-D-galacturonosyl)n+m + H2O = (1,4-alpha-D-galacturonosyl)n + (1,4-alpha-D-galacturonosyl)m.. Its function is as follows. Involved in maceration and soft-rotting of plant tissue. Hydrolyzes the 1,4-alpha glycosidic bonds of de-esterified pectate in the smooth region of the plant cell wall. The chain is Endopolygalacturonase II (pgaII) from Aspergillus niger (strain ATCC 1015 / CBS 113.46 / FGSC A1144 / LSHB Ac4 / NCTC 3858a / NRRL 328 / USDA 3528.7).